A 440-amino-acid chain; its full sequence is Transposon Ty1-NL1 Gag polyprotein (440 aa).

Polar residues-rich tracts occupy residues 1 to 23 (MESQQLSQHSPISHGSACASVTS), 48 to 60 (TKANSQQTTTPAS), 71 to 86 (SPQTAQSHSPQNGPYQ), and 131 to 152 (PQYPSSVGTPLSTPSPESGNTF). Disordered stretches follow at residues 1-86 (MESQ…GPYQ), 131-171 (PQYP…YVRP), and 350-425 (QQES…TEPI). Residues 153 to 165 (TDSSSADSDMTST) show a composition bias toward low complexity. The segment at 299 to 401 (NNGIPINNKV…NSQSRTARAH (103 aa)) is RNA-binding. The segment covering 363 to 372 (NPSDEKKDSR) has biased composition (basic and acidic residues). Residues 373-412 (TYTNTTKPKSITRNSQKPNNSQSRTARAHNVSTSNNSSGP) show a composition bias toward polar residues.

Homotrimer.

The protein localises to the cytoplasm. In terms of biological role, capsid protein (CA) is the structural component of the virus-like particle (VLP), forming the shell that encapsulates the retrotransposons dimeric RNA genome. The particles are assembled from trimer-clustered units and there are holes in the capsid shells that allow for the diffusion of macromolecules. CA also has nucleocapsid-like chaperone activity, promoting primer tRNA(i)-Met annealing to the multipartite primer-binding site (PBS), dimerization of Ty1 RNA and initiation of reverse transcription. This is Transposon Ty1-NL1 Gag polyprotein (TY1A-NL1) from Saccharomyces cerevisiae (strain ATCC 204508 / S288c) (Baker's yeast).